The sequence spans 143 residues: WW domain-containing protein C660.05 (143 aa).

One can recognise a WW domain in the interval 9 to 44 (GLPAGWVAQWDPTYQAYFYINETFEGAQPQWEPPIP). The segment at 115 to 143 (HHGPLHGPHGGFGGRGGGRMGGRGGRGRR) is disordered.

The sequence is that of WW domain-containing protein C660.05 from Schizosaccharomyces pombe (strain 972 / ATCC 24843) (Fission yeast).